An 80-amino-acid polypeptide reads, in one-letter code: UPF0512 protein Q (80 aa).

It belongs to the UPF0512 family.

The sequence is that of UPF0512 protein Q from Dictyostelium discoideum (Social amoeba).